The primary structure comprises 223 residues: N-terminal Xaa-Pro-Lys N-methyltransferase 1 (223 aa).

N-acetylmethionine is present on M1. At T2 the chain carries N-acetylthreonine; in N-terminal Xaa-Pro-Lys N-methyltransferase 1, N-terminally processed. Residues G69, R74, 91 to 93 (DVT), 119 to 120 (LQ), and Q135 each bind S-adenosyl-L-methionine.

Belongs to the methyltransferase superfamily. NTM1 family.

Its subcellular location is the nucleus. It carries out the reaction N-terminal L-alanyl-L-prolyl-L-lysyl-[protein] + 3 S-adenosyl-L-methionine = N-terminal N,N,N-trimethyl-L-alanyl-L-prolyl-L-lysyl-[protein] + 3 S-adenosyl-L-homocysteine + 3 H(+). The catalysed reaction is N-terminal L-seryl-L-prolyl-L-lysyl-[protein] + 3 S-adenosyl-L-methionine = N-terminal N,N,N-trimethyl-L-seryl-L-prolyl-L-lysyl-[protein] + 3 S-adenosyl-L-homocysteine + 3 H(+). It catalyses the reaction N-terminal L-prolyl-L-prolyl-L-lysyl-[protein] + 2 S-adenosyl-L-methionine = N-terminal N,N-dimethyl-L-prolyl-L-prolyl-L-lysyl-[protein] + 2 S-adenosyl-L-homocysteine + 2 H(+). Distributive alpha-N-methyltransferase that methylates the N-terminus of target proteins containing the N-terminal motif [Ala/Gly/Pro/Ser]-Pro-Lys when the initiator Met is cleaved. Specifically catalyzes mono-, di- or tri-methylation of the exposed alpha-amino group of the Ala, Gly or Ser residue in the [Ala/Gly/Ser]-Pro-Lys motif and mono- or di-methylation of Pro in the Pro-Pro-Lys motif. Some of the substrates may be primed by NTMT2-mediated monomethylation. Catalyzes the trimethylation of the N-terminal Gly in CENPA (after removal of Met-1). Responsible for the N-terminal methylation of KLHL31, MYL2, MYL3, RB1, RCC1, RPL23A and SET. Required during mitosis for normal bipolar spindle formation and chromosome segregation via its action on RCC1. This chain is N-terminal Xaa-Pro-Lys N-methyltransferase 1 (NTMT1), found in Bos taurus (Bovine).